The chain runs to 238 residues: uncharacterized protein (238 aa).

Disordered stretches follow at residues 1–51 and 214–238; these read MPCT…ASCA and ITVE…FPTA. Residues 16 to 31 show a composition bias toward low complexity; sequence ATWRTARPAPRRCGSC.

This is an uncharacterized protein from Streptomyces griseus.